Here is a 105-residue protein sequence, read N- to C-terminus: Large ribosomal subunit protein uL23 (105 aa).

It belongs to the universal ribosomal protein uL23 family. Part of the 50S ribosomal subunit. Contacts protein L29, and trigger factor when it is bound to the ribosome.

In terms of biological role, one of the early assembly proteins it binds 23S rRNA. One of the proteins that surrounds the polypeptide exit tunnel on the outside of the ribosome. Forms the main docking site for trigger factor binding to the ribosome. This Herminiimonas arsenicoxydans protein is Large ribosomal subunit protein uL23.